A 261-amino-acid chain; its full sequence is Pyridoxine-5'-phosphate oxidase (261 aa).

A pyridoxal 5'-phosphate-binding site is contributed by 42–45 (RGDP). 95–98 (RMVL) provides a ligand contact to FMN. A pyridoxal 5'-phosphate-binding site is contributed by Lys100. Residues 110–111 (FT), 116–117 (RK), and Gln139 each bind FMN. Pyridoxal 5'-phosphate contacts are provided by Tyr157, Arg161, and Ser165. FMN is bound by residues 174–175 (QS) and Trp219. 225–227 (RLH) is a binding site for pyridoxal 5'-phosphate. Residue Arg229 participates in FMN binding. Residue Thr238 is modified to Phosphothreonine. Residue Ser241 is modified to Phosphoserine.

This sequence belongs to the pyridoxamine 5'-phosphate oxidase family. In terms of assembly, homodimer. The cofactor is FMN.

It carries out the reaction pyridoxamine 5'-phosphate + O2 + H2O = pyridoxal 5'-phosphate + H2O2 + NH4(+). It catalyses the reaction pyridoxine 5'-phosphate + O2 = pyridoxal 5'-phosphate + H2O2. The protein operates within cofactor metabolism; pyridoxal 5'-phosphate salvage; pyridoxal 5'-phosphate from pyridoxamine 5'-phosphate: step 1/1. It participates in cofactor metabolism; pyridoxal 5'-phosphate salvage; pyridoxal 5'-phosphate from pyridoxine 5'-phosphate: step 1/1. Its function is as follows. Catalyzes the oxidation of either pyridoxine 5'-phosphate (PNP) or pyridoxamine 5'-phosphate (PMP) into pyridoxal 5'-phosphate (PLP). The chain is Pyridoxine-5'-phosphate oxidase (PNPO) from Bos taurus (Bovine).